We begin with the raw amino-acid sequence, 439 residues long: FK506-binding protein 59 (439 aa).

PPIase FKBP-type domains are found at residues 32-120 (GCTV…LGWK) and 149-235 (GAFV…VDCG). TPR repeat units lie at residues 252 to 285 (AKVYKEKGTNYFKKENWALAIKMYTKCKNILPTT), 297 to 330 (VATHSNIALCHQKSNDHFEAKQECNEVLALDKNN), and 331 to 364 (VKALYRRGQCNLTINELEDALEDFQKVIQLEPGN).

Interacts with inaD and trpl, and may be part of the inaD signaling complex. As to expression, expression in the embryo is limited to three tissues: lymph glands, Garland cells and oenocyte cells.

The catalysed reaction is [protein]-peptidylproline (omega=180) = [protein]-peptidylproline (omega=0). Its function is as follows. May have a role in phototransduction; inhibits or prevents Ca(2+) induced stimulation of the trpl ion channel. This Drosophila melanogaster (Fruit fly) protein is FK506-binding protein 59.